The chain runs to 264 residues: Thymidylate synthase (264 aa).

A dUMP-binding site is contributed by arginine 21. Position 51 (histidine 51) interacts with (6R)-5,10-methylene-5,6,7,8-tetrahydrofolate. Residue 126-127 (RR) participates in dUMP binding. Cysteine 146 acts as the Nucleophile in catalysis. DUMP contacts are provided by residues 166-169 (RSAD), asparagine 177, and 207-209 (HLY). Aspartate 169 serves as a coordination point for (6R)-5,10-methylene-5,6,7,8-tetrahydrofolate. Alanine 263 provides a ligand contact to (6R)-5,10-methylene-5,6,7,8-tetrahydrofolate.

The protein belongs to the thymidylate synthase family. Bacterial-type ThyA subfamily. Homodimer.

Its subcellular location is the cytoplasm. It carries out the reaction dUMP + (6R)-5,10-methylene-5,6,7,8-tetrahydrofolate = 7,8-dihydrofolate + dTMP. It participates in pyrimidine metabolism; dTTP biosynthesis. Catalyzes the reductive methylation of 2'-deoxyuridine-5'-monophosphate (dUMP) to 2'-deoxythymidine-5'-monophosphate (dTMP) while utilizing 5,10-methylenetetrahydrofolate (mTHF) as the methyl donor and reductant in the reaction, yielding dihydrofolate (DHF) as a by-product. This enzymatic reaction provides an intracellular de novo source of dTMP, an essential precursor for DNA biosynthesis. In Stutzerimonas stutzeri (strain A1501) (Pseudomonas stutzeri), this protein is Thymidylate synthase.